A 954-amino-acid polypeptide reads, in one-letter code: Glucosidase 2 subunit alpha (954 aa).

A signal peptide spans 1–22 (MVLLKWLVCQLVFFTAFSHAFT). 5 N-linked (GlcNAc...) asparagine glycosylation sites follow: Asn-114, Asn-126, Asn-142, Asn-173, and Asn-345. Asp-537 acts as the Nucleophile in catalysis. Glu-540 is an active-site residue. Asp-614 functions as the Proton donor in the catalytic mechanism. 6 N-linked (GlcNAc...) asparagine glycosylation sites follow: Asn-783, Asn-791, Asn-867, Asn-880, Asn-907, and Asn-941.

This sequence belongs to the glycosyl hydrolase 31 family. As to quaternary structure, heterodimer of a catalytic subunit alpha (ROT2) and a subunit beta (GTB1).

The protein localises to the endoplasmic reticulum. The enzyme catalyses N(4)-(alpha-D-Glc-(1-&gt;3)-alpha-D-Man-(1-&gt;2)-alpha-D-Man-(1-&gt;2)-alpha-D-Man-(1-&gt;3)-[alpha-D-Man-(1-&gt;2)-alpha-D-Man-(1-&gt;3)-[alpha-D-Man-(1-&gt;2)-alpha-D-Man-(1-&gt;6)]-alpha-D-Man-(1-&gt;6)]-beta-D-Man-(1-&gt;4)-beta-D-GlcNAc-(1-&gt;4)-beta-D-GlcNAc)-L-asparaginyl-[protein] + H2O = N(4)-(alpha-D-Man-(1-&gt;2)-alpha-D-Man-(1-&gt;2)-alpha-D-Man-(1-&gt;3)-[alpha-D-Man-(1-&gt;2)-alpha-D-Man-(1-&gt;3)-[alpha-D-Man-(1-&gt;2)-alpha-D-Man-(1-&gt;6)]-alpha-D-Man-(1-&gt;6)]-beta-D-Man-(1-&gt;4)-beta-D-GlcNAc-(1-&gt;4)-beta-D-GlcNAc)-L-asparaginyl-[protein] (N-glucan mannose isomer 9A1,2,3B1,2,3) + beta-D-glucose. The catalysed reaction is N(4)-(alpha-D-Glc-(1-&gt;3)-alpha-D-Glc-(1-&gt;3)-alpha-D-Man-(1-&gt;2)-alpha-D-Man-(1-&gt;2)-alpha-D-Man-(1-&gt;3)-[alpha-D-Man-(1-&gt;2)-alpha-D-Man-(1-&gt;3)-[alpha-D-Man-(1-&gt;2)-alpha-D-Man-(1-&gt;6)]-alpha-D-Man-(1-&gt;6)]-beta-D-Man-(1-&gt;4)-beta-D-GlcNAc-(1-&gt;4)-beta-D-GlcNAc)-L-asparaginyl-[protein] + H2O = N(4)-(alpha-D-Glc-(1-&gt;3)-alpha-D-Man-(1-&gt;2)-alpha-D-Man-(1-&gt;2)-alpha-D-Man-(1-&gt;3)-[alpha-D-Man-(1-&gt;2)-alpha-D-Man-(1-&gt;3)-[alpha-D-Man-(1-&gt;2)-alpha-D-Man-(1-&gt;6)]-alpha-D-Man-(1-&gt;6)]-beta-D-Man-(1-&gt;4)-beta-D-GlcNAc-(1-&gt;4)-beta-D-GlcNAc)-L-asparaginyl-[protein] + beta-D-glucose. Its pathway is glycan metabolism; N-glycan metabolism. Its activity is regulated as follows. Inhibited by glucose, maltose and nigerose, and by the antibiotic deoxynojirimycin. Catalytic subunit of glucosidase 2, which cleaves sequentially the 2 innermost alpha-1,3-linked glucose residues from the Glc(2)Man(9)GlcNAc(2) oligosaccharide precursor of immature glycoproteins. The polypeptide is Glucosidase 2 subunit alpha (ROT2) (Saccharomyces cerevisiae (strain ATCC 204508 / S288c) (Baker's yeast)).